Here is a 147-residue protein sequence, read N- to C-terminus: D-aminoacyl-tRNA deacylase (147 aa).

Residues 136–137 carry the Gly-cisPro motif, important for rejection of L-amino acids motif; sequence GP.

It belongs to the DTD family. As to quaternary structure, homodimer.

Its subcellular location is the cytoplasm. The catalysed reaction is glycyl-tRNA(Ala) + H2O = tRNA(Ala) + glycine + H(+). It carries out the reaction a D-aminoacyl-tRNA + H2O = a tRNA + a D-alpha-amino acid + H(+). In terms of biological role, an aminoacyl-tRNA editing enzyme that deacylates mischarged D-aminoacyl-tRNAs. Also deacylates mischarged glycyl-tRNA(Ala), protecting cells against glycine mischarging by AlaRS. Acts via tRNA-based rather than protein-based catalysis; rejects L-amino acids rather than detecting D-amino acids in the active site. By recycling D-aminoacyl-tRNA to D-amino acids and free tRNA molecules, this enzyme counteracts the toxicity associated with the formation of D-aminoacyl-tRNA entities in vivo and helps enforce protein L-homochirality. The protein is D-aminoacyl-tRNA deacylase of Streptococcus pneumoniae serotype 4 (strain ATCC BAA-334 / TIGR4).